Consider the following 312-residue polypeptide: Aminoacyl tRNA synthase complex-interacting multifunctional protein 1 (312 aa).

At Met-1 the chain carries N-acetylmethionine. Ala-2 is modified (N-acetylalanine). The segment at 6-46 is required for fibroblast proliferation; it reads AVLKRLEQKGAEADQIIEYLKQQVSLLKEKAILQATLREEK. An interaction with HSP90B1 region spans residues 54 to 194; the sequence is KLKKEIEELK…APRTVVSGLV (141 aa). A required for endothelial cell death region spans residues 101-114; it reads AVTTVSSGTKEQIK. The disordered stretch occupies residues 107–147; that stretch reads SGTKEQIKGGTGDEKKAKEKIEKKGEKKEKKQQSIAGSADS. A compositionally biased stretch (basic and acidic residues) spans 111–138; sequence EQIKGGTGDEKKAKEKIEKKGEKKEKKQ. Residues 114–192 are required for endothelial cell migration; it reads KGGTGDEKKA…EIAPRTVVSG (79 aa). Lys-137 is covalently cross-linked (Glycyl lysine isopeptide (Lys-Gly) (interchain with G-Cter in SUMO1)). Ser-140 carries the phosphoserine modification. The tRNA-binding domain maps to 151–252; the sequence is DVSRLDLRIG…NGSVPGDRIT (102 aa). Lys-269 is subject to N6-succinyllysine.

Homodimer. Part of the multisynthetase complex (MSC), a multisubunit complex that groups tRNA ligases for Arg (RARS1), Asp (DARS1), Gln (QARS1), Ile (IARS1), Leu (LARS1), Lys (KARS1), Met (MARS1) the bifunctional ligase for Glu and Pro (EPRS1) and the auxiliary subunits AIMP1/p43, AIMP2/p38 and EEF1E1/p18. Interacts (via N-terminus) with RARS1 (via N-terminus). Part of a complex composed of RARS1, QARS1 and AIMP1. Interacts (via C-terminus) with SMURF2. Interacts (via N-terminus) with HSP90B1/gp96 (via C-terminus). Interacts with PSMA7. Interacts with TARS3. Cleaved by caspase-7 in response to apoptosis to produce EMAP-II.

The protein localises to the nucleus. The protein resides in the cytoplasm. It is found in the cytosol. Its subcellular location is the secreted. It localises to the endoplasmic reticulum. The protein localises to the golgi apparatus. In terms of biological role, non-catalytic component of the multisynthase complex. Stimulates the catalytic activity of cytoplasmic arginyl-tRNA synthase. Binds tRNA. Possesses inflammatory cytokine activity. Negatively regulates TGF-beta signaling through stabilization of SMURF2 by binding to SMURF2 and inhibiting its SMAD7-mediated degradation. Involved in glucose homeostasis through induction of glucagon secretion at low glucose levels. Promotes dermal fibroblast proliferation and wound repair. Regulates KDELR1-mediated retention of HSP90B1/gp96 in the endoplasmic reticulum. Plays a role in angiogenesis by inducing endothelial cell migration at low concentrations and endothelian cell apoptosis at high concentrations. Induces maturation of dendritic cells and monocyte cell adhesion. Modulates endothelial cell responses by degrading HIF-1A through interaction with PSMA7. In Homo sapiens (Human), this protein is Aminoacyl tRNA synthase complex-interacting multifunctional protein 1 (AIMP1).